Consider the following 200-residue polypeptide: ADP-ribosylation factor-like protein 4A (200 aa).

The N-myristoyl glycine moiety is linked to residue Gly2. GTP-binding positions include 27-34 (GLDCAGKT), 75-79 (DVGGQ), and 134-137 (NKQD).

The protein belongs to the small GTPase superfamily. Arf family. In terms of assembly, interacts with CYTH2. Interacts with KPNA2; the interaction is direct. Does not interact with ARL4A. In terms of processing, myristoylated.

The protein localises to the cell membrane. The protein resides in the cytoplasm. It localises to the nucleus. It is found in the nucleolus. Functionally, small GTP-binding protein which cycles between an inactive GDP-bound and an active GTP-bound form, and the rate of cycling is regulated by guanine nucleotide exchange factors (GEF) and GTPase-activating proteins (GAP). GTP-binding protein that does not act as an allosteric activator of the cholera toxin catalytic subunit. Recruits CYTH1, CYTH2, CYTH3 and CYTH4 to the plasma membrane in GDP-bound form. In Homo sapiens (Human), this protein is ADP-ribosylation factor-like protein 4A (ARL4A).